Consider the following 219-residue polypeptide: Charged multivesicular body protein 5 (219 aa).

Residues 22 to 153 (TNVDGRAESI…EIQEALSRSY (132 aa)) are a coiled coil.

Belongs to the SNF7 family. In terms of assembly, probable peripherally associated component of the endosomal sorting required for transport complex III (ESCRT-III).

The protein localises to the cytoplasm. It localises to the cytosol. Its subcellular location is the endosome membrane. Functionally, probable peripherally associated component of the endosomal sorting required for transport complex III (ESCRT-III) which is involved in multivesicular bodies (MVBs) formation and sorting of endosomal cargo proteins into MVBs. MVBs contain intraluminal vesicles (ILVs) that are generated by invagination and scission from the limiting membrane of the endosome and mostly are delivered to lysosomes enabling degradation of membrane proteins, such as stimulated growth factor receptors, lysosomal enzymes and lipids. The protein is Charged multivesicular body protein 5 (chmp5) of Xenopus laevis (African clawed frog).